We begin with the raw amino-acid sequence, 359 residues long: UDP-N-acetylglucosamine--N-acetylmuramyl-(pentapeptide) pyrophosphoryl-undecaprenol N-acetylglucosamine transferase (359 aa).

UDP-N-acetyl-alpha-D-glucosamine is bound by residues T12 to G14, N124, R163, S191, I245, A264 to E269, and Q290.

The protein belongs to the glycosyltransferase 28 family. MurG subfamily.

It is found in the cell inner membrane. It carries out the reaction di-trans,octa-cis-undecaprenyl diphospho-N-acetyl-alpha-D-muramoyl-L-alanyl-D-glutamyl-meso-2,6-diaminopimeloyl-D-alanyl-D-alanine + UDP-N-acetyl-alpha-D-glucosamine = di-trans,octa-cis-undecaprenyl diphospho-[N-acetyl-alpha-D-glucosaminyl-(1-&gt;4)]-N-acetyl-alpha-D-muramoyl-L-alanyl-D-glutamyl-meso-2,6-diaminopimeloyl-D-alanyl-D-alanine + UDP + H(+). It participates in cell wall biogenesis; peptidoglycan biosynthesis. Its function is as follows. Cell wall formation. Catalyzes the transfer of a GlcNAc subunit on undecaprenyl-pyrophosphoryl-MurNAc-pentapeptide (lipid intermediate I) to form undecaprenyl-pyrophosphoryl-MurNAc-(pentapeptide)GlcNAc (lipid intermediate II). This chain is UDP-N-acetylglucosamine--N-acetylmuramyl-(pentapeptide) pyrophosphoryl-undecaprenol N-acetylglucosamine transferase, found in Nitrosococcus oceani (strain ATCC 19707 / BCRC 17464 / JCM 30415 / NCIMB 11848 / C-107).